The primary structure comprises 145 residues: MNASNPCRRFPRSARVRTRAQYTIVFDTARRTSDPLLSLHWRTGDTPPRLGMAVSRKVDTRAVGRNRIKRVLRDAMRHLLPELAGGDYVIVARSAAAKATNPQIRDAFVRLLRRAGALPLPAAPGTMPPARTVRPSSPSPTEPEL.

Positions 119 to 145 are disordered; that stretch reads PLPAAPGTMPPARTVRPSSPSPTEPEL.

The protein belongs to the RnpA family. In terms of assembly, consists of a catalytic RNA component (M1 or rnpB) and a protein subunit.

The catalysed reaction is Endonucleolytic cleavage of RNA, removing 5'-extranucleotides from tRNA precursor.. Its function is as follows. RNaseP catalyzes the removal of the 5'-leader sequence from pre-tRNA to produce the mature 5'-terminus. It can also cleave other RNA substrates such as 4.5S RNA. The protein component plays an auxiliary but essential role in vivo by binding to the 5'-leader sequence and broadening the substrate specificity of the ribozyme. This chain is Ribonuclease P protein component, found in Xanthomonas euvesicatoria pv. vesicatoria (strain 85-10) (Xanthomonas campestris pv. vesicatoria).